A 581-amino-acid polypeptide reads, in one-letter code: Serine/threonine-protein kinase PINK1, mitochondrial (581 aa).

Residues 1-77 (MAVRQALGRG…RFFRQSVAGL (77 aa)) constitute a mitochondrion transit peptide. At 78 to 93 (AARLQRQFVVRAWGCA) the chain is on the mitochondrial intermembrane side. Residues 94 to 110 (GPCGRAVFLAFGLGLGL) traverse the membrane as a helical segment. The tract at residues 111–117 (IEEKQAE) is required for outer membrane localization. Residues 111–581 (IEEKQAESRR…LLLCSWRAAL (471 aa)) are Cytoplasmic-facing. Residues 156–511 (YLIGQSIGKG…VAANVLHLSL (356 aa)) form the Protein kinase domain. Residues 162 to 170 (IGKGCSAAV) and lysine 186 contribute to the ATP site. Residues 189–208 (GLLPGRGPGTSAPGEGQERA) form a disordered region. Residue serine 228 is modified to Phosphoserine; by autocatalysis. Catalysis depends on aspartate 362, which acts as the Proton acceptor. Residue serine 402 is modified to Phosphoserine; by autocatalysis.

Belongs to the protein kinase superfamily. Ser/Thr protein kinase family. As to quaternary structure, upon mitochondrial depolarization, it forms a supercomplex with TOM and TIM23 complexes. PINK1-TOM-TIM23 supercomplex formation requires PINK1 interaction with TOMM20 and TOMM70 and is critical for PINK1 stabilization at the outer mitochondrial membrane, kinase activation and downstream mitophagy. Upon mitochondrial depolarization, interacts with TIMM23; the interaction is required for PINK1 accumulation at the outer mitochondrial membrane, kinase activation by autophosphorylation and PRKN recruitement to mitochondria. Interacts with PRKN. Interacts with FBXO7. Forms a complex with PRKN and PARK7. Interacts with NENF. It depends on Mg(2+) as a cofactor. Post-translationally, proteolytically cleaved. In healthy cells, the precursor is continuously imported into the inner mitochondrial membrane (IMM), where it is proteolytically cleaved by mitochondrial-processing peptidase (MPP) and then undergoes further proteolytic cleavage by PARL or AFG3L2 to give rise to the 52 kDa short form. The 52 kDa short form is then released into the cytosol where it rapidly undergoes proteasome-dependent degradation. In unhealthy cells, when cellular stress conditions lead to the loss of mitochondrial membrane potential, mitochondrial import is impaired leading to the precursor accumulating on the outer mitochondrial membrane (OMM). If accumulation at the OMM fails and it is imported into the depolarized mitochondria, it undergoes cleavage by the IMM protease OMA1, promoting its subsequent degradation by the proteasome. In terms of processing, autophosphorylated. Loss of mitochondrial membrane potential results in the precursor accumulating on the outer mitochondrial membrane (OMM) where it is activated by autophosphorylation. Autophosphorylation at Ser-228 and Ser-402 is sufficient and essential for selective recruitment of PRKN to depolarized mitochondria, via PINK1-dependent phosphorylation of ubiquitin and maybe PRKN. As to expression, highly expressed in heart, skeletal muscle and testis, and at lower levels in brain, placenta, liver, kidney, pancreas, prostate, ovary and small intestine. Present in the embryonic testis from an early stage of development.

It localises to the mitochondrion outer membrane. The protein localises to the mitochondrion inner membrane. The protein resides in the cytoplasm. It is found in the cytosol. It carries out the reaction L-seryl-[protein] + ATP = O-phospho-L-seryl-[protein] + ADP + H(+). The enzyme catalyses L-threonyl-[protein] + ATP = O-phospho-L-threonyl-[protein] + ADP + H(+). In terms of biological role, serine/threonine-protein kinase which acts as a sensor of mitochondrial damage and protects against mitochondrial dysfunction during cellular stress. It phosphorylates mitochondrial proteins to coordinate mitochondrial quality control mechanisms that remove and replace dysfunctional mitochondrial components. Depending on the severity of mitochondrial damage, activity ranges from preventing apoptosis and stimulating mitochondrial biogenesis to eliminating severely damaged mitochondria via PINK1-PRKN-dependent mitophagy. When cellular stress results in irreversible mitochondrial damage, PINK1 accumulates at the outer mitochondrial membrane (OMM) where it phosphorylates pre-existing polyubiquitin chains at 'Ser-65', recruits PRKN from the cytosol to the OMM and activates PRKN by phosphorylation at 'Ser-65'; activated PRKN then ubiquinates VDAC1 and other OMM proteins to initiate mitophagy. The PINK1-PRKN pathway also promotes fission of damaged mitochondria through phosphorylation and PRKN-dependent degradation of mitochondrial proteins involved in fission such as MFN2. This prevents the refusion of unhealthy mitochondria with the mitochondrial network or initiates mitochondrial fragmentation facilitating their later engulfment by autophagosomes. Also promotes mitochondrial fission independently of PRKN and ATG7-mediated mitophagy, via the phosphorylation and activation of DNM1L. Regulates motility of damaged mitochondria by promoting the ubiquitination and subsequent degradation of MIRO1 and MIRO2; in motor neurons, this likely inhibits mitochondrial intracellular anterograde transport along the axons which probably increases the chance of the mitochondria undergoing mitophagy in the soma. Required for ubiquinone reduction by mitochondrial complex I by mediating phosphorylation of complex I subunit NDUFA10. Phosphorylates LETM1, positively regulating its mitochondrial calcium transport activity. The sequence is that of Serine/threonine-protein kinase PINK1, mitochondrial (PINK1) from Homo sapiens (Human).